Consider the following 319-residue polypeptide: Transcriptional regulator LsrR (319 aa).

A DNA-binding region (H-T-H motif) is located at residues 32-55 (QSEISERLGLTRLKVSRLLEKGHQ).

This sequence belongs to the SorC transcriptional regulatory family.

The protein localises to the cytoplasm. Its activity is regulated as follows. Inactivated by phosphorylated autoinducer-2 (phospho-AI-2). Phospho-AI-2 acts by binding to LsrR, which is then unable to bind to the promoter regions, allowing the transcription of the target genes. Functionally, transcriptional regulator that represses the expression of the lsr operon (lsrACDBFGE) in the absence of the quorum-sensing signaling molecule autoinducer 2 (AI-2). It also represses the expression of the lsrRK operon. Acts by binding to the intergenic region between the lsr operon and lsrR. In the presence of phosphorylated autoinducer-2 (phospho-AI-2), LsrR is inactivated, leading to the transcription of the genes. The regulatory function of LsrR was thought to be limited to the lsr operon, but it was subsequently shown to be involved, directly or indirectly, in the regulation of SPI-1 and flagella genes. It negatively regulates the expression of those genes, which reduces the ability of Salmonella to invade host cells. The protein is Transcriptional regulator LsrR of Salmonella typhimurium (strain LT2 / SGSC1412 / ATCC 700720).